We begin with the raw amino-acid sequence, 176 residues long: METQRASLSLGRCSLWLLLLGLVLPSASAQALSYREAVLRAVDQFNERSSEANLYRLLELDPTPNDDLDPGTRKPVSFRVKETDCPRTSQQPLEQCDFKENGLVKQCVGTVTLDPSNDQFDINCNELQSVRFRPPIRRPPIRPPFYPPFRPPIRPPIFPPIRPPFRPPLGPFPGRR.

A signal peptide spans 1 to 29; that stretch reads METQRASLSLGRCSLWLLLLGLVLPSASA. Glutamine 30 carries the pyrrolidone carboxylic acid modification. Positions 30–130 are excised as a propeptide; sequence QALSYREAVL…DINCNELQSV (101 aa). 2 disulfides stabilise this stretch: cysteine 85-cysteine 96 and cysteine 107-cysteine 124. The disordered stretch occupies residues 157 to 176; the sequence is IFPPIRPPFRPPLGPFPGRR. Proline 173 carries the post-translational modification Proline amide. A propeptide spans 174-176 (removed in mature form); the sequence is GRR.

It belongs to the cathelicidin family. Elastase is responsible for its maturation. In terms of tissue distribution, large granules of neutrophils.

The protein localises to the secreted. Exerts, in vitro, a potent antimicrobial activity. Probably due to an impairment of the function of the respiratory chain and of energy-dependent activities in the inner membrane of susceptible microorganisms. This chain is Cathelicidin-2 (CATHL2), found in Bos taurus (Bovine).